A 149-amino-acid polypeptide reads, in one-letter code: Urease accessory protein UreE (149 aa).

This sequence belongs to the UreE family.

The protein localises to the cytoplasm. In terms of biological role, involved in urease metallocenter assembly. Binds nickel. Probably functions as a nickel donor during metallocenter assembly. The sequence is that of Urease accessory protein UreE from Prochlorococcus marinus (strain AS9601).